A 366-amino-acid chain; its full sequence is Glutathione S-transferase omega-like 3 (366 aa).

Cys-46 is an active-site residue. Residues 197-349 enclose the GST C-terminal domain; sequence PRSLEAQITE…LGYTRSQPRV (153 aa).

It belongs to the GST superfamily. Omega family.

It localises to the cytoplasm. It catalyses the reaction RX + glutathione = an S-substituted glutathione + a halide anion + H(+). Its function is as follows. Active as '1-Cys' thiol transferase against beta-hydroxyethyl disulfide (HED), as dehydroascorbate reductase and as dimethylarsinic acid reductase, while not active against the standard GST substrate 1-chloro-2,4-dinitrobenzene (CDNB). This is Glutathione S-transferase omega-like 3 (GTO3) from Saccharomyces cerevisiae (strain ATCC 204508 / S288c) (Baker's yeast).